Reading from the N-terminus, the 476-residue chain is Proline--tRNA ligase (476 aa).

The protein belongs to the class-II aminoacyl-tRNA synthetase family. ProS type 3 subfamily. Homodimer.

Its subcellular location is the cytoplasm. It catalyses the reaction tRNA(Pro) + L-proline + ATP = L-prolyl-tRNA(Pro) + AMP + diphosphate. Its function is as follows. Catalyzes the attachment of proline to tRNA(Pro) in a two-step reaction: proline is first activated by ATP to form Pro-AMP and then transferred to the acceptor end of tRNA(Pro). This chain is Proline--tRNA ligase, found in Mycoplasma mobile (strain ATCC 43663 / 163K / NCTC 11711) (Mesomycoplasma mobile).